A 159-amino-acid polypeptide reads, in one-letter code: 2-C-methyl-D-erythritol 2,4-cyclodiphosphate synthase (159 aa).

2 residues coordinate a divalent metal cation: Asp-8 and His-10. Residues 8–10 (DVH) and 34–35 (HS) each bind 4-CDP-2-C-methyl-D-erythritol 2-phosphate. His-42 contacts a divalent metal cation. 4-CDP-2-C-methyl-D-erythritol 2-phosphate contacts are provided by residues 56–58 (DIG), 61–65 (FPDTD), 100–106 (AQAPKML), 132–135 (TTTE), Phe-139, and Arg-142.

This sequence belongs to the IspF family. As to quaternary structure, homotrimer. It depends on a divalent metal cation as a cofactor.

The catalysed reaction is 4-CDP-2-C-methyl-D-erythritol 2-phosphate = 2-C-methyl-D-erythritol 2,4-cyclic diphosphate + CMP. Its pathway is isoprenoid biosynthesis; isopentenyl diphosphate biosynthesis via DXP pathway; isopentenyl diphosphate from 1-deoxy-D-xylulose 5-phosphate: step 4/6. Functionally, involved in the biosynthesis of isopentenyl diphosphate (IPP) and dimethylallyl diphosphate (DMAPP), two major building blocks of isoprenoid compounds. Catalyzes the conversion of 4-diphosphocytidyl-2-C-methyl-D-erythritol 2-phosphate (CDP-ME2P) to 2-C-methyl-D-erythritol 2,4-cyclodiphosphate (ME-CPP) with a corresponding release of cytidine 5-monophosphate (CMP). In Salmonella typhimurium (strain LT2 / SGSC1412 / ATCC 700720), this protein is 2-C-methyl-D-erythritol 2,4-cyclodiphosphate synthase.